We begin with the raw amino-acid sequence, 382 residues long: Alkanesulfonate monooxygenase (382 aa).

The protein belongs to the SsuD family. Homotetramer.

The catalysed reaction is an alkanesulfonate + FMNH2 + O2 = an aldehyde + FMN + sulfite + H2O + 2 H(+). Functionally, catalyzes the desulfonation of aliphatic sulfonates. This chain is Alkanesulfonate monooxygenase, found in Yersinia pseudotuberculosis serotype O:1b (strain IP 31758).